The sequence spans 150 residues: 3-hydroxyacyl-[acyl-carrier-protein] dehydratase FabZ (150 aa).

The active site involves His-52.

The protein belongs to the thioester dehydratase family. FabZ subfamily.

It is found in the cytoplasm. The enzyme catalyses a (3R)-hydroxyacyl-[ACP] = a (2E)-enoyl-[ACP] + H2O. In terms of biological role, involved in unsaturated fatty acids biosynthesis. Catalyzes the dehydration of short chain beta-hydroxyacyl-ACPs and long chain saturated and unsaturated beta-hydroxyacyl-ACPs. The protein is 3-hydroxyacyl-[acyl-carrier-protein] dehydratase FabZ of Variovorax paradoxus (strain S110).